The chain runs to 207 residues: Large ribosomal subunit protein uL4 (207 aa).

The interval 50-75 (KTKTVSEVSGTTKKPFKQKGTGNARQ) is disordered.

The protein belongs to the universal ribosomal protein uL4 family. Part of the 50S ribosomal subunit.

Its function is as follows. One of the primary rRNA binding proteins, this protein initially binds near the 5'-end of the 23S rRNA. It is important during the early stages of 50S assembly. It makes multiple contacts with different domains of the 23S rRNA in the assembled 50S subunit and ribosome. Forms part of the polypeptide exit tunnel. The polypeptide is Large ribosomal subunit protein uL4 (Rickettsia akari (strain Hartford)).